Here is a 344-residue protein sequence, read N- to C-terminus: Tetraacyldisaccharide 4'-kinase (344 aa).

Position 65–72 (65–72) interacts with ATP; that stretch reads HAGGTGKT.

This sequence belongs to the LpxK family.

The catalysed reaction is a lipid A disaccharide + ATP = a lipid IVA + ADP + H(+). It functions in the pathway glycolipid biosynthesis; lipid IV(A) biosynthesis; lipid IV(A) from (3R)-3-hydroxytetradecanoyl-[acyl-carrier-protein] and UDP-N-acetyl-alpha-D-glucosamine: step 6/6. Functionally, transfers the gamma-phosphate of ATP to the 4'-position of a tetraacyldisaccharide 1-phosphate intermediate (termed DS-1-P) to form tetraacyldisaccharide 1,4'-bis-phosphate (lipid IVA). The sequence is that of Tetraacyldisaccharide 4'-kinase from Neisseria meningitidis serogroup C / serotype 2a (strain ATCC 700532 / DSM 15464 / FAM18).